The chain runs to 180 residues: uncharacterized protein (180 aa).

Residues M1 to Q31 form a disordered region. S2 is subject to N-acetylserine. The RING-type zinc finger occupies C109–R153.

This is an uncharacterized protein from Saccharomyces cerevisiae (strain ATCC 204508 / S288c) (Baker's yeast).